Consider the following 314-residue polypeptide: Aspartate carbamoyltransferase catalytic subunit (314 aa).

Carbamoyl phosphate contacts are provided by Arg-58 and Thr-59. Lys-86 is an L-aspartate binding site. Arg-108, His-136, and Gln-139 together coordinate carbamoyl phosphate. 2 residues coordinate L-aspartate: Arg-169 and Arg-223. Residues Gly-264 and Pro-265 each coordinate carbamoyl phosphate.

Belongs to the aspartate/ornithine carbamoyltransferase superfamily. ATCase family. As to quaternary structure, heterododecamer (2C3:3R2) of six catalytic PyrB chains organized as two trimers (C3), and six regulatory PyrI chains organized as three dimers (R2).

The enzyme catalyses carbamoyl phosphate + L-aspartate = N-carbamoyl-L-aspartate + phosphate + H(+). It functions in the pathway pyrimidine metabolism; UMP biosynthesis via de novo pathway; (S)-dihydroorotate from bicarbonate: step 2/3. Its function is as follows. Catalyzes the condensation of carbamoyl phosphate and aspartate to form carbamoyl aspartate and inorganic phosphate, the committed step in the de novo pyrimidine nucleotide biosynthesis pathway. In Roseobacter denitrificans (strain ATCC 33942 / OCh 114) (Erythrobacter sp. (strain OCh 114)), this protein is Aspartate carbamoyltransferase catalytic subunit.